The sequence spans 396 residues: Phosphoglycerate kinase (396 aa).

Substrate-binding positions include 22-24 (DFN), R37, 60-63 (HFGR), R118, and R151. ATP is bound by residues K201, E322, and 352-355 (GGDS).

The protein belongs to the phosphoglycerate kinase family. Monomer.

It is found in the cytoplasm. The catalysed reaction is (2R)-3-phosphoglycerate + ATP = (2R)-3-phospho-glyceroyl phosphate + ADP. It functions in the pathway carbohydrate degradation; glycolysis; pyruvate from D-glyceraldehyde 3-phosphate: step 2/5. The polypeptide is Phosphoglycerate kinase (Wolbachia pipientis subsp. Culex pipiens (strain wPip)).